The primary structure comprises 457 residues: Argininosuccinate lyase (457 aa).

The protein belongs to the lyase 1 family. Argininosuccinate lyase subfamily.

Its subcellular location is the cytoplasm. The enzyme catalyses 2-(N(omega)-L-arginino)succinate = fumarate + L-arginine. The protein operates within amino-acid biosynthesis; L-arginine biosynthesis; L-arginine from L-ornithine and carbamoyl phosphate: step 3/3. The protein is Argininosuccinate lyase of Aquifex aeolicus (strain VF5).